Reading from the N-terminus, the 468-residue chain is Probable Xaa-Pro aminopeptidase PEPP (468 aa).

Positions 264, 275, 398, and 438 each coordinate Mn(2+).

It belongs to the peptidase M24B family. It depends on Mn(2+) as a cofactor.

The catalysed reaction is Release of any N-terminal amino acid, including proline, that is linked to proline, even from a dipeptide or tripeptide.. Its function is as follows. Catalyzes the removal of a penultimate prolyl residue from the N-termini of peptides. This Paracoccidioides brasiliensis (strain Pb18) protein is Probable Xaa-Pro aminopeptidase PEPP (PEPP).